A 91-amino-acid chain; its full sequence is C-C motif chemokine 5 (91 aa).

The first 23 residues, M1 to A23, serve as a signal peptide directing secretion. Disulfide bonds link C33–C57 and C34–C73.

Belongs to the intercrine beta (chemokine CC) family.

It is found in the secreted. Its function is as follows. Chemoattractant for blood monocytes, memory T-helper cells and eosinophils. Causes the release of histamine from basophils and activates eosinophils. May activate several chemokine receptors including CCR1, CCR3, CCR4 and CCR5. May also be an agonist of the G protein-coupled receptor GPR75. Together with GPR75, may play a role in neuron survival through activation of a downstream signaling pathway involving the PI3, Akt and MAP kinases. By activating GPR75 may also play a role in insulin secretion by islet cells. The chain is C-C motif chemokine 5 (CCL5) from Equus caballus (Horse).